The sequence spans 424 residues: MARSFPPPSALRDFLESESAGGILLIFAAILAMIVANSPLATLYHDLIHAVTGPVLTDKLGPMTVHLWINDGLMAVFFLLVGLEIKREFVDGRLASWDRRRLPFIAAAAGMAVPAALYMFFVGDEPGLAQGWAIPAATDIAFAMGVLALLGRRAPTSLKLFLVTVAIVDDMGAVAIIALFYTAKINLLALGAAAAILGIMFACNRGGVKNLLVYMALFLLLWYAMLLSGVHATIAGVLAAMAIPFERTPGAPDSQTSPLHRLEHALHPTVAFAIVPLFGFANAGVDVRALGLDQLFAPLPLGIAAGLFLGKQIGIFGSVWLAVKLGIAGRLRGATWLQVYAVSMLCGIGFTMSLFIGSLAFPGNALLIEEAKIGILMGSLASALVGFAVLRLAPLHPEHNAVESASKGEIAVDGDVRDTSEAAR.

11 helical membrane-spanning segments follow: residues 23-43, 65-85, 102-122, 131-151, 160-180, 183-203, 211-231, 265-285, 303-323, 341-361, and 373-393; these read ILLI…LATL, VHLW…GLEI, LPFI…MFFV, GWAI…ALLG, LFLV…IALF, AKIN…MFAC, LLVY…SGVH, ALHP…NAGV, IAAG…WLAV, AVSM…SLAF, and IGIL…LRLA.

Belongs to the NhaA Na(+)/H(+) (TC 2.A.33) antiporter family.

It is found in the cell inner membrane. The enzyme catalyses Na(+)(in) + 2 H(+)(out) = Na(+)(out) + 2 H(+)(in). Functionally, na(+)/H(+) antiporter that extrudes sodium in exchange for external protons. This is Na(+)/H(+) antiporter NhaA from Sphingopyxis alaskensis (strain DSM 13593 / LMG 18877 / RB2256) (Sphingomonas alaskensis).